The sequence spans 367 residues: Heme A synthase (367 aa).

5 consecutive transmembrane segments (helical) span residues 25 to 45 (AIRI…LVGG), 111 to 131 (FLAR…VLTG), 137 to 157 (LWLP…IGWW), 174 to 194 (LATH…FMRA), and 211 to 231 (LAGL…LVAG). Heme is bound at residue histidine 274. 3 consecutive transmembrane segments (helical) span residues 276–296 (LGAY…LRAA), 305–325 (SVVL…TLLL), and 327–347 (VPLH…GFAI). Residue histidine 335 coordinates heme.

The protein belongs to the COX15/CtaA family. Type 2 subfamily. As to quaternary structure, interacts with CtaB. Heme b is required as a cofactor.

The protein resides in the cell membrane. It catalyses the reaction Fe(II)-heme o + 2 A + H2O = Fe(II)-heme a + 2 AH2. The protein operates within porphyrin-containing compound metabolism; heme A biosynthesis; heme A from heme O: step 1/1. In terms of biological role, catalyzes the conversion of heme O to heme A by two successive hydroxylations of the methyl group at C8. The first hydroxylation forms heme I, the second hydroxylation results in an unstable dihydroxymethyl group, which spontaneously dehydrates, resulting in the formyl group of heme A. The sequence is that of Heme A synthase from Rhizobium rhizogenes (strain K84 / ATCC BAA-868) (Agrobacterium radiobacter).